A 475-amino-acid polypeptide reads, in one-letter code: Ribulose bisphosphate carboxylase large chain (475 aa).

Residues 1-2 constitute a propeptide that is removed on maturation; that stretch reads MS. Proline 3 is subject to N-acetylproline. Lysine 14 bears the N6,N6,N6-trimethyllysine mark. Residues asparagine 123 and threonine 173 each contribute to the substrate site. Lysine 175 functions as the Proton acceptor in the catalytic mechanism. Lysine 177 contacts substrate. Lysine 201, aspartate 203, and glutamate 204 together coordinate Mg(2+). Residue lysine 201 is modified to N6-carboxylysine. Histidine 294 (proton acceptor) is an active-site residue. Positions 295, 327, and 379 each coordinate substrate.

This sequence belongs to the RuBisCO large chain family. Type I subfamily. As to quaternary structure, heterohexadecamer of 8 large chains and 8 small chains; disulfide-linked. The disulfide link is formed within the large subunit homodimers. The cofactor is Mg(2+). Post-translationally, the disulfide bond which can form in the large chain dimeric partners within the hexadecamer appears to be associated with oxidative stress and protein turnover.

It is found in the plastid. The protein localises to the chloroplast. It carries out the reaction 2 (2R)-3-phosphoglycerate + 2 H(+) = D-ribulose 1,5-bisphosphate + CO2 + H2O. The catalysed reaction is D-ribulose 1,5-bisphosphate + O2 = 2-phosphoglycolate + (2R)-3-phosphoglycerate + 2 H(+). RuBisCO catalyzes two reactions: the carboxylation of D-ribulose 1,5-bisphosphate, the primary event in carbon dioxide fixation, as well as the oxidative fragmentation of the pentose substrate in the photorespiration process. Both reactions occur simultaneously and in competition at the same active site. This Bouvardia ternifolia (Firecrackerbush) protein is Ribulose bisphosphate carboxylase large chain.